Consider the following 471-residue polypeptide: Tryptophanase (471 aa).

N6-acetyllysine occurs at positions 5, 115, and 156. Lys-270 is modified (N6-(pyridoxal phosphate)lysine). N6-acetyllysine is present on Lys-450.

Belongs to the beta-eliminating lyase family. As to quaternary structure, homotetramer. The cofactor is pyridoxal 5'-phosphate.

The enzyme catalyses L-tryptophan + H2O = indole + pyruvate + NH4(+). The protein operates within amino-acid degradation; L-tryptophan degradation via pyruvate pathway; indole and pyruvate from L-tryptophan: step 1/1. This is Tryptophanase from Escherichia coli O9:H4 (strain HS).